We begin with the raw amino-acid sequence, 703 residues long: Serotransferrin (703 aa).

A signal peptide spans 1–19; it reads MDLSLHVALCLGMLALCLA. 2 consecutive Transferrin-like domains span residues 27–341 and 354–686; these read VRWC…ALKE and VRWC…SLNK. Intrachain disulfides connect Cys-30–Cys-65 and Cys-40–Cys-56. Residues Asp-80 and Tyr-112 each coordinate Fe(3+). Intrachain disulfides connect Cys-135/Cys-218, Cys-180/Cys-193, and Cys-246/Cys-260. Hydrogencarbonate contacts are provided by Thr-137, Lys-141, Ala-143, and Gly-144. Tyr-212 is a Fe(3+) binding site. His-268 contributes to the Fe(3+) binding site. The tract at residues 341–350 is connecting region; the sequence is EGVKEDDLAA. 2 disulfides stabilise this stretch: Cys-357/Cys-389 and Cys-367/Cys-380. Asp-404 and Tyr-443 together coordinate Fe(3+). Cystine bridges form between Cys-414-Cys-698, Cys-432-Cys-659, Cys-466-Cys-545, Cys-490-Cys-687, Cys-500-Cys-514, Cys-511-Cys-528, and Cys-585-Cys-599. Hydrogencarbonate-binding residues include Thr-468, Arg-472, Ala-474, and Gly-475. Tyr-539 contributes to the Fe(3+) binding site. His-607 contacts Fe(3+).

It belongs to the transferrin family. As to quaternary structure, monomer. In terms of tissue distribution, plasma.

It is found in the secreted. In terms of biological role, transferrins are iron binding transport proteins which can bind two Fe(3+) ions in association with the binding of an anion, usually bicarbonate. It is responsible for the transport of iron from sites of absorption and heme degradation to those of storage and utilization. Serum transferrin may also have a further role in stimulating cell proliferation. The chain is Serotransferrin (tf) from Xenopus tropicalis (Western clawed frog).